The sequence spans 179 residues: Large ribosomal subunit protein uL5 (179 aa).

It belongs to the universal ribosomal protein uL5 family. As to quaternary structure, part of the 50S ribosomal subunit; part of the 5S rRNA/L5/L18/L25 subcomplex. Contacts the 5S rRNA and the P site tRNA. Forms a bridge to the 30S subunit in the 70S ribosome.

Functionally, this is one of the proteins that bind and probably mediate the attachment of the 5S RNA into the large ribosomal subunit, where it forms part of the central protuberance. In the 70S ribosome it contacts protein S13 of the 30S subunit (bridge B1b), connecting the 2 subunits; this bridge is implicated in subunit movement. Contacts the P site tRNA; the 5S rRNA and some of its associated proteins might help stabilize positioning of ribosome-bound tRNAs. The chain is Large ribosomal subunit protein uL5 from Caldanaerobacter subterraneus subsp. tengcongensis (strain DSM 15242 / JCM 11007 / NBRC 100824 / MB4) (Thermoanaerobacter tengcongensis).